The chain runs to 743 residues: Putative pre-mRNA-splicing factor ATP-dependent RNA helicase DHX32 (743 aa).

Methionine 1 bears the N-acetylmethionine mark. Residues 1–28 are disordered; the sequence is MEEEGLECPNSSSEKRYFPESLDSSDGD. Residues 72 to 238 enclose the Helicase ATP-binding domain; it reads MENLLQNQIV…YGNVPVIEVK (167 aa). 85-92 provides a ligand contact to ATP; the sequence is GDAKCGKS. The DEAH box motif lies at 185-188; that stretch reads DDIH.

Belongs to the DEAD box helicase family. DEAH subfamily. Expressed in lymphoid tissues (at protein level). Expressed in brain, heart, skeletal muscle, colon, thymus, spleen, kidney, liver, small intestine, placenta, lung, lymphoid tissues and blood leukocytes.

It is found in the nucleus. The protein localises to the mitochondrion. It carries out the reaction ATP + H2O = ADP + phosphate + H(+). The chain is Putative pre-mRNA-splicing factor ATP-dependent RNA helicase DHX32 (DHX32) from Homo sapiens (Human).